The following is a 294-amino-acid chain: Bifunctional protein FolD (294 aa).

NADP(+) is bound by residues 171–173 (GRS), S196, and I237.

This sequence belongs to the tetrahydrofolate dehydrogenase/cyclohydrolase family. Homodimer.

It catalyses the reaction (6R)-5,10-methylene-5,6,7,8-tetrahydrofolate + NADP(+) = (6R)-5,10-methenyltetrahydrofolate + NADPH. It carries out the reaction (6R)-5,10-methenyltetrahydrofolate + H2O = (6R)-10-formyltetrahydrofolate + H(+). Its pathway is one-carbon metabolism; tetrahydrofolate interconversion. In terms of biological role, catalyzes the oxidation of 5,10-methylenetetrahydrofolate to 5,10-methenyltetrahydrofolate and then the hydrolysis of 5,10-methenyltetrahydrofolate to 10-formyltetrahydrofolate. This Synechocystis sp. (strain ATCC 27184 / PCC 6803 / Kazusa) protein is Bifunctional protein FolD.